The chain runs to 598 residues: Mitochondrial distribution and morphology protein 30 (598 aa).

An F-box domain is found at 13–59 (SFTIDHLPPEIWLCISKLVGTSDLHNLCLINRRLYLTITSDEIWKRR).

As to quaternary structure, interacts with SKP1. Component of the probable SCF(MDM30) complex containing CDC53, SKP1, RBX1 and MDM30. Interacts with SKP1 and FZO1.

Its subcellular location is the cytoplasm. The protein localises to the mitochondrion. It functions in the pathway protein modification; protein ubiquitination. Its function is as follows. Substrate recognition component of a SCF (SKP1-CUL1-F-box protein) E3 ubiquitin-protein ligase complex which mediates the ubiquitination and subsequent proteasomal degradation of target proteins. Probably recognizes and binds to phosphorylated target proteins. Recognizes FZO1 and regulates the amount of FZO1. Regulatory factor for the mitochondrial fusion machinery. Required for mitochondrial DNA maintenance. The polypeptide is Mitochondrial distribution and morphology protein 30 (MDM30) (Saccharomyces cerevisiae (strain ATCC 204508 / S288c) (Baker's yeast)).